We begin with the raw amino-acid sequence, 52 residues long: Large ribosomal subunit protein bL33 (52 aa).

The protein belongs to the bacterial ribosomal protein bL33 family.

This Campylobacter jejuni subsp. jejuni serotype O:6 (strain 81116 / NCTC 11828) protein is Large ribosomal subunit protein bL33.